Reading from the N-terminus, the 1114-residue chain is Translation initiation factor IF-2 (1114 aa).

Disordered regions lie at residues 69-102 (SIKKDNFKQNKSPSISSKKETPLKDNSNKKPLLI) and 181-507 (INNN…KRRA). The span at 85–96 (SKKETPLKDNSN) shows a compositional bias: basic and acidic residues. Over residues 181–198 (INNNVKSNESSQNISSAG) the composition is skewed to polar residues. Over residues 240 to 251 (INPNKQNNKQNI) the composition is skewed to low complexity. A compositionally biased stretch (polar residues) spans 252 to 261 (AFKQTGSNRI). Low complexity-rich tracts occupy residues 262–278 (GSPNRPGMPNNRPGLRN), 290–309 (NRQGNPNRPGMPNNRPGLRN), and 321–337 (NRQGNPNRPGMPNNRPG). Basic and acidic residues predominate over residues 365 to 375 (NSEKDNKDKNN). Positions 376–385 (NAKQNINGPN) are enriched in low complexity. Over residues 417 to 431 (GKTDWDDSAKLEALR) the composition is skewed to basic and acidic residues. A compositionally biased stretch (basic residues) spans 489 to 505 (KQFKKKKKETTRQRQKR). Residues 606 to 778 (RRPPVITVMG…ILLVSEVEDL (173 aa)) enclose the tr-type G domain. Residues 615 to 622 (GHVDHGKT) form a G1 region. A GTP-binding site is contributed by 615–622 (GHVDHGKT). Positions 640-644 (GITQH) are G2. A G3 region spans residues 665–668 (DTPG). GTP-binding positions include 665–669 (DTPGH) and 719–722 (NKID). Residues 719–722 (NKID) form a G4 region. Residues 755-757 (SAI) are G5.

Belongs to the TRAFAC class translation factor GTPase superfamily. Classic translation factor GTPase family. IF-2 subfamily.

The protein resides in the cytoplasm. One of the essential components for the initiation of protein synthesis. Protects formylmethionyl-tRNA from spontaneous hydrolysis and promotes its binding to the 30S ribosomal subunits. Also involved in the hydrolysis of GTP during the formation of the 70S ribosomal complex. The polypeptide is Translation initiation factor IF-2 (Prochlorococcus marinus (strain MIT 9301)).